An 83-amino-acid chain; its full sequence is Large ribosomal subunit protein uL23 (83 aa).

Belongs to the universal ribosomal protein uL23 family. In terms of assembly, part of the 50S ribosomal subunit. Contacts protein L29.

Functionally, binds to 23S rRNA. One of the proteins that surrounds the polypeptide exit tunnel on the outside of the ribosome. In Archaeoglobus fulgidus (strain ATCC 49558 / DSM 4304 / JCM 9628 / NBRC 100126 / VC-16), this protein is Large ribosomal subunit protein uL23.